Here is a 642-residue protein sequence, read N- to C-terminus: Threonine--tRNA ligase (642 aa).

One can recognise a TGS domain in the interval 1-61; that stretch reads MPVITLPDGS…ENDAQLSIIT (61 aa). The interval 243–534 is catalytic; that stretch reads DHRKIGKQLD…LTEEFAGFFP (292 aa). An N6-acetyllysine modification is found at Lys-286. Cys-334, His-385, and His-511 together coordinate Zn(2+).

The protein belongs to the class-II aminoacyl-tRNA synthetase family. As to quaternary structure, homodimer. Zn(2+) serves as cofactor.

Its subcellular location is the cytoplasm. It carries out the reaction tRNA(Thr) + L-threonine + ATP = L-threonyl-tRNA(Thr) + AMP + diphosphate + H(+). Functionally, catalyzes the attachment of threonine to tRNA(Thr) in a two-step reaction: L-threonine is first activated by ATP to form Thr-AMP and then transferred to the acceptor end of tRNA(Thr). Also edits incorrectly charged L-seryl-tRNA(Thr). This Escherichia coli O8 (strain IAI1) protein is Threonine--tRNA ligase.